The sequence spans 56 residues: Large ribosomal subunit protein bL33 (56 aa).

The protein belongs to the bacterial ribosomal protein bL33 family.

The protein is Large ribosomal subunit protein bL33 of Beutenbergia cavernae (strain ATCC BAA-8 / DSM 12333 / CCUG 43141 / JCM 11478 / NBRC 16432 / NCIMB 13614 / HKI 0122).